Reading from the N-terminus, the 327-residue chain is Zinc transport protein ZntB (327 aa).

At 1–273 the chain is on the cytoplasmic side; the sequence is MEGIKGSEVN…SRRTYTMSLM (273 aa). The helical transmembrane segment at 274–294 threads the bilayer; that stretch reads AMVFLPSTFLTGLFGVNLGGI. Topologically, residues 295 to 300 are periplasmic; the sequence is PGGGYQ. A helical transmembrane segment spans residues 301 to 321; the sequence is FGFSAFCIMLVVLIGGVAWWL. Residues 322–327 are Cytoplasmic-facing; the sequence is HRSKWL.

It belongs to the CorA metal ion transporter (MIT) (TC 1.A.35) family.

The protein localises to the cell inner membrane. It catalyses the reaction Zn(2+)(out) + H(+)(out) = Zn(2+)(in) + H(+)(in). Zinc transporter. Acts as a Zn(2+):proton symporter, which likely mediates zinc ion uptake. In Enterobacter sp. (strain 638), this protein is Zinc transport protein ZntB.